Consider the following 109-residue polypeptide: Prothymosin alpha (109 aa).

A disordered region spans residues 1–109 (MSDTSVDASV…AKKQKTDDDD (109 aa)). The segment covering 9–35 (SVEKTTKDLKSKDKELVEETENGKDKP) has biased composition (basic and acidic residues). The span at 41-81 (ENEENGEDGADNEEEEEVDEEDEEDEGEGDDDEGDEDDEAD) shows a compositional bias: acidic residues. The segment covering 99–109 (DAKKQKTDDDD) has biased composition (basic and acidic residues).

The protein belongs to the pro/parathymosin family. As to expression, highly expressed in the testis.

The protein resides in the nucleus. Its function is as follows. May have role in testicular activity. In Pelophylax lessonae (Pool frog), this protein is Prothymosin alpha.